We begin with the raw amino-acid sequence, 194 residues long: Lectin-C (194 aa).

A signal peptide spans 1 to 26; sequence MKRSNSIAVMLVLVLSSLMLLLPVEG. The propeptide at 27-44 is removed in mature form; sequence QGHEGHGVGEILLMGKLG. 3 consecutive Chitin-binding type-1 domains span residues 45-86, 87-127, and 128-168; these read APVC…QCDY, NRCG…QCSY, and WRCG…QCDL. Intrachain disulfides connect cysteine 48/cysteine 63, cysteine 57/cysteine 69, cysteine 62/cysteine 76, cysteine 80/cysteine 84, cysteine 89/cysteine 104, cysteine 98/cysteine 110, cysteine 103/cysteine 117, cysteine 121/cysteine 125, cysteine 130/cysteine 145, cysteine 139/cysteine 151, cysteine 144/cysteine 158, and cysteine 162/cysteine 166. The propeptide at 171–194 is removed in mature form; sequence LLPSPLRRIIAIRKLKANLANMLS.

In terms of assembly, homodimer. The homodimers are asymmetric; formed in a 'head-to-tail' fashion via hydrophobic interactions between aromatic residues of the carbohydrate-binding sites of each subunit.

In terms of biological role, N-acetyl-D-glucosamine binding lectin. Almost no hemagglutinating activity towards human erythrocytes. Low mitogenic activity towards human peripheral blood lymphocytes. This Phytolacca americana (American pokeweed) protein is Lectin-C.